A 472-amino-acid chain; its full sequence is Putative diacyglycerol O-acyltransferase MT3172 (472 aa).

The Proton acceptor role is filled by histidine 139. Residues 217–238 (DRRVPPTFDRSAPPGPFQRGLS) are disordered.

It belongs to the long-chain O-acyltransferase family.

The catalysed reaction is an acyl-CoA + a 1,2-diacyl-sn-glycerol = a triacyl-sn-glycerol + CoA. It functions in the pathway glycerolipid metabolism; triacylglycerol biosynthesis. The protein is Putative diacyglycerol O-acyltransferase MT3172 of Mycobacterium tuberculosis (strain CDC 1551 / Oshkosh).